Reading from the N-terminus, the 268-residue chain is Embryonic abundant protein USP87 (268 aa).

Residues 1 to 22 form the signal peptide; that stretch reads MEFAHLTVLSLFCLAFVGITAT. 5 repeat units span residues 50 to 55, 83 to 88, 101 to 106, 166 to 183, and 202 to 222. The segment at 50 to 106 is 3 X 6 AA approximate repeats; the sequence is GKTNSLPIKSEELKQYSTLFFEHDLHPRKNFILGNTNSVGSIIRPFTKSRQGVTDSI. The BURP domain maps to 68–259; that stretch reads LFFEHDLHPR…GNKAAAWVPN (192 aa). The 2 X approximate repeats stretch occupies residues 166–222; the sequence is YVVEDVKKVGDNAVMCHRLNFEKVVFNCHQVRDTTAYVVSLVASDGTKTKALTVCHH. N-linked (GlcNAc...) asparagine glycosylation is present at asparagine 259.

In terms of tissue distribution, seed.

The sequence is that of Embryonic abundant protein USP87 from Vicia faba (Broad bean).